We begin with the raw amino-acid sequence, 379 residues long: MNNEKSNAKLRFIISGGGTGGHIFPAISIADALRRRYPECEILFVGAEGRMEMERVPRSGYEIVGLPIKGLDRKHLLSNYKVAIAVIRSMRLANKTIRNFRPDMVIGVGGYASGPTLRRAHSLGIPTLIQEQNSYAGVTNKLLSRGAHKICVAYPEMDKFFSPEKIVFTGNPVRPEIEFGHPSRSESLRFFGFEQSESPVVLVVGGSLGALTINKSITDKLGKWAESGVHLIWQTGKNYIETARKAVENHPGLKCYVNDFITRMDYAYCAADLVVSRAGACSISELCLLGKPTILVPSPNVAEDHQTKNALALSTRAAAVLIPDTEAIELLTDTALSLVRNLAELSSLSEQIRTLAKPQAADRIVDEIARIVEHEKRAN.

UDP-N-acetyl-alpha-D-glucosamine is bound by residues 19–21 (TGG), Asn133, Arg174, Ser207, Ile261, and Gln306.

Belongs to the glycosyltransferase 28 family. MurG subfamily.

Its subcellular location is the cell inner membrane. The catalysed reaction is di-trans,octa-cis-undecaprenyl diphospho-N-acetyl-alpha-D-muramoyl-L-alanyl-D-glutamyl-meso-2,6-diaminopimeloyl-D-alanyl-D-alanine + UDP-N-acetyl-alpha-D-glucosamine = di-trans,octa-cis-undecaprenyl diphospho-[N-acetyl-alpha-D-glucosaminyl-(1-&gt;4)]-N-acetyl-alpha-D-muramoyl-L-alanyl-D-glutamyl-meso-2,6-diaminopimeloyl-D-alanyl-D-alanine + UDP + H(+). It functions in the pathway cell wall biogenesis; peptidoglycan biosynthesis. In terms of biological role, cell wall formation. Catalyzes the transfer of a GlcNAc subunit on undecaprenyl-pyrophosphoryl-MurNAc-pentapeptide (lipid intermediate I) to form undecaprenyl-pyrophosphoryl-MurNAc-(pentapeptide)GlcNAc (lipid intermediate II). The sequence is that of UDP-N-acetylglucosamine--N-acetylmuramyl-(pentapeptide) pyrophosphoryl-undecaprenol N-acetylglucosamine transferase from Porphyromonas gingivalis (strain ATCC 33277 / DSM 20709 / CIP 103683 / JCM 12257 / NCTC 11834 / 2561).